Consider the following 926-residue polypeptide: Transcriptional activator protein acu-15 (926 aa).

A DNA-binding region (zn(2)-C6 fungal-type) is located at residues 24-51 (CDRCRSKKIRCDGIRPCCSQCANVGFEC). Disordered regions lie at residues 100–129 (KMHSNRSRSAEPPRSTPAAEIKRDSGTPAK), 602–649 (LPQS…SASL), and 667–801 (TPQH…TSTG). Residues 119–129 (EIKRDSGTPAK) show a composition bias toward basic and acidic residues. Composition is skewed to low complexity over residues 623–632 (AQQGSPSPSA) and 669–681 (QHQQYQHQQLQQQ). 2 stretches are compositionally biased toward polar residues: residues 689–703 (ARSQTSFDNLRQKAQ) and 726–736 (RTSTGTQSTPN). Positions 740–792 (LSLSSPQSPVSPVQMRSQPHQLQQQQQQQPQPQQQQQQHQRSSIASSHSQQGQ) are enriched in low complexity.

It is found in the nucleus. Functionally, positive regulator of acetate induction. This is Transcriptional activator protein acu-15 (acu-15) from Neurospora crassa (strain ATCC 24698 / 74-OR23-1A / CBS 708.71 / DSM 1257 / FGSC 987).